The primary structure comprises 30 residues: Trypsin inhibitor 7 (30 aa).

Cystine bridges form between cysteine 4–cysteine 21, cysteine 11–cysteine 23, and cysteine 17–cysteine 29.

This sequence belongs to the protease inhibitor I7 (squash-type serine protease inhibitor) family.

The protein localises to the secreted. In terms of biological role, strongly inhibits trypsin, weakly inhibits chymotrypsin. The sequence is that of Trypsin inhibitor 7 from Cyclanthera pedata (Achocha).